We begin with the raw amino-acid sequence, 259 residues long: uncharacterized protein (259 aa).

Residues His-9, His-11, Glu-97, His-133, His-157, and Asp-207 each contribute to the a divalent metal cation site.

This sequence belongs to the metallo-dependent hydrolases superfamily. TatD-type hydrolase family. The cofactor is a divalent metal cation.

This is an uncharacterized protein from Escherichia coli (strain K12).